We begin with the raw amino-acid sequence, 354 residues long: MEQNWFFPPHQGIRLGDLADRIGAELSDASVADHPIHGVAPVYRAKAGDVCYMLSRKSRDELESCQASAIICDKAIASIVPSRIPVLLTQKPHTAFALAGALLHGEALRPSYNTSLRGIAPGAFIDPTARLEPGVEVEPTAVVGAGAEIGSGTRIAAGAVIGPQVRIGRDCTISAGASILCALIGNNVIIHPGARIGQDGFGYAPGPKGGMIKIVQVGRVIIQDHVEIGANTTVDRGTMDDTVIGEGTKIDNLVQIGHNVRIGRYCGIVSQVGIAGSARIGDGVMIGGNAGVNGHTTIGDGAQIAAMSGVASDVPAGERYGGIPARPMRDFLREVAEIAMRSSERHKKKGGKDE.

His258 functions as the Proton acceptor in the catalytic mechanism.

Belongs to the transferase hexapeptide repeat family. LpxD subfamily. Homotrimer.

The catalysed reaction is a UDP-3-O-[(3R)-3-hydroxyacyl]-alpha-D-glucosamine + a (3R)-hydroxyacyl-[ACP] = a UDP-2-N,3-O-bis[(3R)-3-hydroxyacyl]-alpha-D-glucosamine + holo-[ACP] + H(+). Its pathway is bacterial outer membrane biogenesis; LPS lipid A biosynthesis. In terms of biological role, catalyzes the N-acylation of UDP-3-O-acylglucosamine using 3-hydroxyacyl-ACP as the acyl donor. Is involved in the biosynthesis of lipid A, a phosphorylated glycolipid that anchors the lipopolysaccharide to the outer membrane of the cell. This is UDP-3-O-acylglucosamine N-acyltransferase from Sinorhizobium fredii (strain NBRC 101917 / NGR234).